The chain runs to 80 residues: Large ribosomal subunit protein bL31B (80 aa).

The protein belongs to the bacterial ribosomal protein bL31 family. Type B subfamily. As to quaternary structure, part of the 50S ribosomal subunit.

This is Large ribosomal subunit protein bL31B from Streptococcus pneumoniae serotype 2 (strain D39 / NCTC 7466).